We begin with the raw amino-acid sequence, 177 residues long: Nucleoside triphosphate/diphosphate phosphatase (177 aa).

Catalysis depends on arginine 23, which acts as the Proton donor. Mg(2+) contacts are provided by asparagine 87, aspartate 103, aspartate 105, aspartate 107, aspartate 120, and glutamate 123.

Belongs to the Ntdp family. It depends on Mg(2+) as a cofactor.

It carries out the reaction a ribonucleoside 5'-triphosphate + H2O = a ribonucleoside 5'-diphosphate + phosphate + H(+). It catalyses the reaction a ribonucleoside 5'-diphosphate + H2O = a ribonucleoside 5'-phosphate + phosphate + H(+). Its function is as follows. Has nucleoside phosphatase activity towards nucleoside triphosphates and nucleoside diphosphates. The sequence is that of Nucleoside triphosphate/diphosphate phosphatase from Streptococcus suis (strain 98HAH33).